Here is a 457-residue protein sequence, read N- to C-terminus: tRNA modification GTPase MnmE (457 aa).

Arg25, Glu87, and Arg126 together coordinate (6S)-5-formyl-5,6,7,8-tetrahydrofolate. Residues 223 to 377 (GISTAIIGRP…IEERINNLFF (155 aa)) enclose the TrmE-type G domain. A K(+)-binding site is contributed by Asn233. Residues 233–238 (NVGKSS), 252–258 (TDIAGTT), and 277–280 (DTAG) contribute to the GTP site. Ser237 lines the Mg(2+) pocket. Residues Thr252, Ile254, and Thr257 each contribute to the K(+) site. Thr258 is a binding site for Mg(2+). Lys457 is a binding site for (6S)-5-formyl-5,6,7,8-tetrahydrofolate.

This sequence belongs to the TRAFAC class TrmE-Era-EngA-EngB-Septin-like GTPase superfamily. TrmE GTPase family. In terms of assembly, homodimer. Heterotetramer of two MnmE and two MnmG subunits. The cofactor is K(+).

It is found in the cytoplasm. Functionally, exhibits a very high intrinsic GTPase hydrolysis rate. Involved in the addition of a carboxymethylaminomethyl (cmnm) group at the wobble position (U34) of certain tRNAs, forming tRNA-cmnm(5)s(2)U34. In Streptococcus pneumoniae (strain Hungary19A-6), this protein is tRNA modification GTPase MnmE.